A 97-amino-acid chain; its full sequence is Large ribosomal subunit protein bL28 (97 aa).

The protein belongs to the bacterial ribosomal protein bL28 family.

This is Large ribosomal subunit protein bL28 from Rickettsia prowazekii (strain Madrid E).